We begin with the raw amino-acid sequence, 371 residues long: 4-hydroxyphenylpyruvate dioxygenase-like protein (371 aa).

VOC domains lie at arginine 7–arginine 135 and histidine 160–lysine 328. 3 residues coordinate Fe cation: histidine 163, histidine 258, and glutamate 339.

It belongs to the 4HPPD family. The cofactor is Fe cation.

It is found in the mitochondrion. It carries out the reaction 3-(4-hydroxyphenyl)pyruvate + O2 = (S)-4-hydroxymandelate + CO2. Functionally, iron-dependent dioxygenase that catalyzes the conversion of 4-hydroxyphenylpyruvate (4-HPPA) to 4-hydroxymandelate (4-HMA) in the mitochondria, one of the steps in the biosynthesis of coenzyme Q10 from tyrosine. The sequence is that of 4-hydroxyphenylpyruvate dioxygenase-like protein from Mus musculus (Mouse).